Here is a 104-residue protein sequence, read N- to C-terminus: Large ribosomal subunit protein uL24 (104 aa).

This sequence belongs to the universal ribosomal protein uL24 family. In terms of assembly, part of the 50S ribosomal subunit.

Functionally, one of two assembly initiator proteins, it binds directly to the 5'-end of the 23S rRNA, where it nucleates assembly of the 50S subunit. In terms of biological role, one of the proteins that surrounds the polypeptide exit tunnel on the outside of the subunit. The chain is Large ribosomal subunit protein uL24 from Citrobacter koseri (strain ATCC BAA-895 / CDC 4225-83 / SGSC4696).